The sequence spans 160 residues: Putative flagellin YvzB (160 aa).

It belongs to the bacterial flagellin family. In terms of assembly, interacts with FliW.

The protein resides in the bacterial flagellum. The protein is Putative flagellin YvzB (yvzB) of Bacillus subtilis (strain 168).